A 208-amino-acid chain; its full sequence is Fucoxanthin-chlorophyll a-c binding protein, chloroplastic (208 aa).

The N-terminal 31 residues, 1–31, are a transit peptide targeting the chloroplast; it reads MMTLASLPSTAIAGLASAAPKVQPRMAANDE. Residues 102–118 traverse the membrane as a helical segment; that stretch reads IPQLPYWLWIVMTIGIG.

It belongs to the fucoxanthin chlorophyll protein family. As to quaternary structure, the LHC complex of chromophytic algae is composed of fucoxanthin, chlorophyll A and C bound non-covalently by fucoxanthin chlorophyll proteins (FCPs). The ratio of pigments in this LHC is; fucoxanthin: chlorophyll C: chlorophyll A; (0.6-1): (0.1-0.3): (1).

It localises to the plastid. It is found in the chloroplast thylakoid membrane. The light-harvesting complex (LHC) functions as a light receptor, it captures and delivers excitation energy to photosystems with which it is closely associated. Energy is transferred from the carotenoid and chlorophyll C (or B) to chlorophyll A and the photosynthetic reaction centers where it is used to synthesize ATP and reducing power. This chain is Fucoxanthin-chlorophyll a-c binding protein, chloroplastic (FCP), found in Isochrysis galbana (Marine planktonic alga).